A 285-amino-acid chain; its full sequence is Complex I assembly factor TIMMDC1, mitochondrial (285 aa).

The next 4 helical transmembrane spans lie at 80–100, 137–159, 165–185, and 188–208; these read AAVSAGIIGWAYGGIPAFIYA, RWSWRTAVFVTIFNTVNTGLTVY, MSHFAIAGAVTGGLFRINLGV, and LVAGSIIGALLGAPMGSLLMA. The segment at 265–285 is disordered; sequence RIEELLSLPRNPSSPHQQSKH. Positions 274-285 are enriched in polar residues; it reads RNPSSPHQQSKH. S277 carries the post-translational modification Phosphoserine.

The protein belongs to the Tim17/Tim22/Tim23 family. As to quaternary structure, associates with the intermediate 315 kDa subcomplex of incompletely assembled complex I. Interacts with TMEM70.

Its subcellular location is the mitochondrion membrane. Chaperone protein involved in the assembly of the mitochondrial NADH:ubiquinone oxidoreductase complex (complex I). Participates in constructing the membrane arm of complex I. This Mus musculus (Mouse) protein is Complex I assembly factor TIMMDC1, mitochondrial.